Consider the following 33-residue polypeptide: Zinc metalloproteinase-disintegrin-like moojenin (33 aa).

The 26-residue stretch at 8–33 (PPVCGNELLEVGEECDCGTPENCQNE) folds into the Disintegrin domain. 6 residues coordinate Ca(2+): V10, N13, L15, E17, E20, and D23. 2 disulfide bridges follow: C11/C30 and C24/C30.

This sequence belongs to the venom metalloproteinase (M12B) family. P-III subfamily. P-IIIb sub-subfamily. As to quaternary structure, monomer. Requires Zn(2+) as cofactor. The N-terminus (from the N-terminal region of the metalloproteinase domain) is blocked. As to expression, expressed by the venom gland.

Its subcellular location is the secreted. Its activity is regulated as follows. The fibrinogenolytic and coagulant activities of the moojenin were abolished by preincubation with EDTA, 1,10-phenanthroline and beta-mercaptoethanol. Its function is as follows. Metalloproteinase moojenin: snake venom metalloproteinase that cleaves both alpha- and beta-chains of fibrinogen, but not the gamma-chain. Shows a coagulant activity on bovine plasma about 3.1 fold lower than crude venom. Renders the blood incoagulable when intraperitoneally administered into mice. Induces necrosis in liver and muscle, but does not cause histological alterations in mouse lungs, kidney or heart. The sequence is that of Zinc metalloproteinase-disintegrin-like moojenin from Bothrops moojeni (Lance-headed viper).